A 992-amino-acid polypeptide reads, in one-letter code: MVMRTRPLAAMAVRSCFSALTGTVYLLLVLCEVSWAQIFSFPFQRPETCDLNQYFDISALSCAPCGANQRRDALGTSCICLPGYHMISNNGGPSIICKKCPENMKGVTKDGWDCISCPNGLTAEGKCHCPSGHILVERNVSGSLLSQATCELCDGNENSFTKPNALGTRCVRCEPTFVNTSRSCSCSEPHISTGGLCFSNTGNFPQRLISTERYGELGMSSNSEWFTKYLQATAAACWTHSNLTSCQALGNMCVMNMNSYDSTTFDACRLFHYVFEGAAGLTGVHSVPFWRQNLPWLFYGDQPGLASQVLSTTPLPTNFSFKGQNQLKFVAASYDIRGNFIRWQTVKGGVLQLCPDTERRLDAAYSFGTTYQQNCEISLSKLLADFPSPVFYDIYLEYTDEVQHHYLWAIPVLNLNLQHNKLFVNQDSSSSKWLLTRRIFLVDAVSGRENDLGNQPRVIRVATQISLSIRLVPNTKNGNIYTPLLTIAYSDIDIKNAYSQSVKISFSVKYEMNQGDAFVQTDIALGVLGGLAVLSSLLKTAGWKRRIGSPMIDLQTVMKFLLYYAGDLANVFFIITVGTGLYWLIFFKAQKSVSVLLPMPVQEERFVTYVGCAFAMKALQFLHKLISQITIDIFFIDWERPKGKVLKAVEGEGGVRSATVPVSIWRTYFVANEWNEIQTVRKINPLFQVLTTLFFLEVVGFKNLALMDPSSSLSRSLSDYAAPYSRILRYAVATTIWLVIGIVQVVFFAAFYERFIEDKIRQFVDLCSMSNVSVFLLSHRCFGYYIHGRSVHGHADTNMEDMNMNLRREAENLCSQRGLVPNTDGQTFQIAVSSQMRQHYDRIHETLTRRNGPARLLSSSGSTLEQSIKAYHAMNKFLGSFIDHVHKEMDYFIKDKLLLEKILGMEFMEPLEKSIFYNDESHSFSSVLYYGNEATLLIFDLLFFCVVDLACQNFVLASFLTYLQQEIFRFIRNTVGQKNLATKTLVDERFLI.

Positions methionine 1–tryptophan 35 are cleaved as a signal peptide. Topologically, residues alanine 36–aspartate 516 are extracellular. The segment at glutamine 37–glycine 280 is cysteine-rich. 12 disulfide bridges follow: cysteine 49–cysteine 62, cysteine 65–cysteine 78, cysteine 80–cysteine 97, cysteine 100–cysteine 114, cysteine 117–cysteine 127, cysteine 129–cysteine 150, cysteine 153–cysteine 170, cysteine 173–cysteine 184, cysteine 186–cysteine 197, cysteine 237–cysteine 246, cysteine 253–cysteine 268, and cysteine 354–cysteine 375. N-linked (GlcNAc...) asparagine glycosylation is present at asparagine 242. Residues alanine 517–arginine 545 traverse the membrane as a helical segment. At arginine 546–glutamine 555 the chain is on the cytoplasmic side. The chain crosses the membrane as a helical span at residues threonine 556–phenylalanine 587. The Extracellular portion of the chain corresponds to lysine 588 to proline 600. Residues valine 601–glutamine 628 traverse the membrane as a helical segment. The Cytoplasmic segment spans residues isoleucine 629–threonine 667. Residues tyrosine 668 to glutamate 676 constitute an intramembrane region (helical). The discontinuously helical transmembrane segment at tyrosine 668–valine 698 threads the bilayer. The stretch at isoleucine 677–proline 685 is an intramembrane region. The segment at residues leucine 686–valine 698 is an intramembrane region (helical). Over valine 699 to leucine 728 the chain is Extracellular. Positions arginine 729–arginine 754 form an intramembrane region, helical. A discontinuously helical transmembrane segment spans residues arginine 729 to serine 768. An intramembrane segment occupies phenylalanine 755 to lysine 759. Positions isoleucine 760–serine 768 form an intramembrane region, helical. Topologically, residues methionine 769–serine 923 are cytoplasmic. The segment at residues phenylalanine 924–serine 926 is an intramembrane region (helical). The chain crosses the membrane as a discontinuously helical span at residues phenylalanine 924–leucine 949. An intramembrane segment occupies valine 927–glutamate 933. The segment at residues alanine 934 to leucine 949 is an intramembrane region (helical). Residues alanine 950 to phenylalanine 954 lie on the Extracellular side of the membrane. The helical transmembrane segment at valine 955–threonine 982 threads the bilayer. Residues lysine 983 to isoleucine 992 are Cytoplasmic-facing.

In terms of assembly, homodimer. Part of the tectonic-like complex (also named B9 complex). Interacts with DNAJB9, DNAJC10 and mutated SFTPC. Interacts with SYNE2 during the early establishment of cell polarity. Interacts (via C-terminus) with FLNA. Interacts with TMEM218. Interacts with WNT5A. Interacts with ROR2.

The protein resides in the cell membrane. Its subcellular location is the endoplasmic reticulum membrane. The protein localises to the cytoplasm. It is found in the cytoskeleton. It localises to the cilium basal body. Part of the tectonic-like complex which is required for tissue-specific ciliogenesis and may regulate ciliary membrane composition. Involved in centrosome migration to the apical cell surface during early ciliogenesis. Required for ciliary structure and function, including a role in regulating length and appropriate number through modulating centrosome duplication. Is a key regulator of stereociliary bundle orientation. Required for epithelial cell branching morphology. Essential for endoplasmic reticulum-associated degradation (ERAD) of surfactant protein C (sftpc). Involved in the negative regulation of canonical Wnt signaling, and activation of the non-canonical cascade stimulated by WNT5A. In non-canonical Wnt signaling, it may act as ROR2 coreceptor. The sequence is that of Meckelin (Tmem67) from Rattus norvegicus (Rat).